A 230-amino-acid chain; its full sequence is Ion-translocating oxidoreductase complex subunit E (230 aa).

5 consecutive transmembrane segments (helical) span residues 39-59, 69-89, 93-113, 125-145, and 182-202; these read LGLGIATLLVLVGSNVTVSLI, IPVFVMIIASLVTCVQLLMNA, GLYLSLGIFIPLIVTNCIIIG, LPAALDGFWMGMGMTTVLVVL, and SFLLALLPPGAFIGVGLLIAL.

This sequence belongs to the NqrDE/RnfAE family. The complex is composed of six subunits: RnfA, RnfB, RnfC, RnfD, RnfE and RnfG.

It localises to the cell inner membrane. Its function is as follows. Part of a membrane-bound complex that couples electron transfer with translocation of ions across the membrane. The chain is Ion-translocating oxidoreductase complex subunit E from Vibrio vulnificus (strain YJ016).